A 143-amino-acid chain; its full sequence is Large ribosomal subunit protein uL11 (143 aa).

It belongs to the universal ribosomal protein uL11 family. As to quaternary structure, part of the ribosomal stalk of the 50S ribosomal subunit. Interacts with L10 and the large rRNA to form the base of the stalk. L10 forms an elongated spine to which L12 dimers bind in a sequential fashion forming a multimeric L10(L12)X complex. Post-translationally, one or more lysine residues are methylated.

Its function is as follows. Forms part of the ribosomal stalk which helps the ribosome interact with GTP-bound translation factors. The polypeptide is Large ribosomal subunit protein uL11 (Polynucleobacter asymbioticus (strain DSM 18221 / CIP 109841 / QLW-P1DMWA-1) (Polynucleobacter necessarius subsp. asymbioticus)).